The chain runs to 306 residues: Abnormal cell migration protein 21 (306 aa).

2 consecutive TSP type-1 domains span residues 55-102 and 109-155; these read PGGW…AISS and FGSW…DECP. 2 C-linked (Man) tryptophan glycosylation sites follow: Trp-58 and Trp-61. Disulfide bonds link Cys-121/Cys-149, Cys-123/Cys-154, and Cys-134/Cys-139. Residues 240–260 traverse the membrane as a helical segment; it reads CLPLHFAIPIFCFCILTGFLL.

In terms of processing, glycosylated via C-mannosylation by dpy-19 at Trp-58 and Trp-61.

It is found in the membrane. Required for determination of left/right asymmetry in nervous system. Acts together with unc-40 to control an initial left-right asymmetric polarization of the Q neuroblasts. Mig-21 and unc-40 may control the asymmetry in Wnt signaling response by restricting posterior polarization to one of the 2 Q neuroblasts. Involved in left-side QL posterior migration. In right-side QR, unc-40 and mig-21 pathways mutually inhibit each other in posterior migration, allowing anterior QR migration. In Caenorhabditis elegans, this protein is Abnormal cell migration protein 21 (mig-21).